Here is a 197-residue protein sequence, read N- to C-terminus: Ribonuclease HII (197 aa).

Residues 9-197 (KLIAGVDEVG…APVKKALEQF (189 aa)) enclose the RNase H type-2 domain. 3 residues coordinate a divalent metal cation: Asp15, Glu16, and Asp107.

It belongs to the RNase HII family. Mn(2+) is required as a cofactor. It depends on Mg(2+) as a cofactor.

The protein resides in the cytoplasm. The enzyme catalyses Endonucleolytic cleavage to 5'-phosphomonoester.. Its function is as follows. Endonuclease that specifically degrades the RNA of RNA-DNA hybrids. The protein is Ribonuclease HII (rnhB) of Haemophilus influenzae (strain ATCC 51907 / DSM 11121 / KW20 / Rd).